We begin with the raw amino-acid sequence, 393 residues long: NADH-quinone oxidoreductase subunit D (393 aa).

Belongs to the complex I 49 kDa subunit family. In terms of assembly, NDH-1 is composed of 14 different subunits. Subunits NuoB, C, D, E, F, and G constitute the peripheral sector of the complex.

It is found in the cell inner membrane. It catalyses the reaction a quinone + NADH + 5 H(+)(in) = a quinol + NAD(+) + 4 H(+)(out). Its function is as follows. NDH-1 shuttles electrons from NADH, via FMN and iron-sulfur (Fe-S) centers, to quinones in the respiratory chain. The immediate electron acceptor for the enzyme in this species is believed to be ubiquinone. Couples the redox reaction to proton translocation (for every two electrons transferred, four hydrogen ions are translocated across the cytoplasmic membrane), and thus conserves the redox energy in a proton gradient. In Ehrlichia chaffeensis (strain ATCC CRL-10679 / Arkansas), this protein is NADH-quinone oxidoreductase subunit D.